The sequence spans 424 residues: Histone-binding protein RBBP7 (424 aa).

7 WD repeats span residues 47-121 (QWLP…KINH), 127-172 (RARY…LRLR), 180-216 (GLSWNSNLKGHLLSASDDHTVCLWDISAGPKEGKIVD), 227-268 (VVED…HSVD), 274-311 (VNCLSFNPYSEFILATGSADKTVALWDLRNLKLKLHSF), 317-368 (EIFQ…LFIH), and 375-402 (ISDFSWNPNEPWVICSVSEDNIMQIWQM). The interaction with HAT1 stretch occupies residues 359-404 (DGPPELLFIHGGHTAKISDFSWNPNEPWVICSVSEDNIMQIWQMAE).

This sequence belongs to the WD repeat RBAP46/RBAP48/MSI1 family. In terms of assembly, binds directly to helix 1 of the histone fold of histone H4, a region that is not accessible when H4 is in chromatin. Also interacts with histone H2B and HAT1.

It is found in the nucleus. Core histone-binding subunit that may target chromatin remodeling factors, histone acetyltransferases and histone deacetylases to their histone substrates in a manner that is regulated by nucleosomal DNA. Component of several complexes which regulate chromatin metabolism. This is Histone-binding protein RBBP7 (RBBP7) from Gallus gallus (Chicken).